The primary structure comprises 256 residues: Pimeloyl-[acyl-carrier protein] methyl ester esterase (256 aa).

An AB hydrolase-1 domain is found at 15-242 (HLVLLHGWGL…AAHAPFISHP (228 aa)). Substrate contacts are provided by residues Trp-22, 82-83 (SL), and 143-147 (FLALQ). The Nucleophile role is filled by Ser-82. Active-site residues include Asp-207 and His-235. Substrate is bound at residue His-235.

This sequence belongs to the AB hydrolase superfamily. Carboxylesterase BioH family. As to quaternary structure, monomer.

Its subcellular location is the cytoplasm. It carries out the reaction 6-carboxyhexanoyl-[ACP] methyl ester + H2O = 6-carboxyhexanoyl-[ACP] + methanol + H(+). It participates in cofactor biosynthesis; biotin biosynthesis. Functionally, the physiological role of BioH is to remove the methyl group introduced by BioC when the pimeloyl moiety is complete. It allows to synthesize pimeloyl-ACP via the fatty acid synthetic pathway through the hydrolysis of the ester bonds of pimeloyl-ACP esters. This Escherichia coli O8 (strain IAI1) protein is Pimeloyl-[acyl-carrier protein] methyl ester esterase.